Consider the following 644-residue polypeptide: Chaperone protein DnaK (644 aa).

The residue at position 199 (Thr-199) is a Phosphothreonine; by autocatalysis. Positions 605 to 644 (KKSSEGQAAQGQTQSQESTKPAEEGVVDAEFEEVKEEDKK) are disordered. Residues 609–623 (EGQAAQGQTQSQEST) are compositionally biased toward polar residues. Positions 629–644 (GVVDAEFEEVKEEDKK) are enriched in acidic residues.

The protein belongs to the heat shock protein 70 family.

Functionally, acts as a chaperone. The protein is Chaperone protein DnaK of Legionella pneumophila subsp. pneumophila (strain Philadelphia 1 / ATCC 33152 / DSM 7513).